We begin with the raw amino-acid sequence, 120 residues long: MDSCSSTPFVTGVLLPSAVFSFLFCTLVSSSFGLDEFNLTTCGIRGTLKMQFLKFLENTLIFLGSGNLTAHIGILVMKNDLSNSRIWRFTGGLYGNTPDILHELINLLNFWNTGSAIFMQ.

2 helical membrane-spanning segments follow: residues 8-28 and 55-75; these read PFVT…CTLV and FLEN…IGIL.

Its subcellular location is the membrane. This is an uncharacterized protein from Saccharomyces cerevisiae (strain ATCC 204508 / S288c) (Baker's yeast).